The chain runs to 158 residues: SsrA-binding protein (158 aa).

This sequence belongs to the SmpB family.

It is found in the cytoplasm. Functionally, required for rescue of stalled ribosomes mediated by trans-translation. Binds to transfer-messenger RNA (tmRNA), required for stable association of tmRNA with ribosomes. tmRNA and SmpB together mimic tRNA shape, replacing the anticodon stem-loop with SmpB. tmRNA is encoded by the ssrA gene; the 2 termini fold to resemble tRNA(Ala) and it encodes a 'tag peptide', a short internal open reading frame. During trans-translation Ala-aminoacylated tmRNA acts like a tRNA, entering the A-site of stalled ribosomes, displacing the stalled mRNA. The ribosome then switches to translate the ORF on the tmRNA; the nascent peptide is terminated with the 'tag peptide' encoded by the tmRNA and targeted for degradation. The ribosome is freed to recommence translation, which seems to be the essential function of trans-translation. In Symbiobacterium thermophilum (strain DSM 24528 / JCM 14929 / IAM 14863 / T), this protein is SsrA-binding protein.